The following is a 243-amino-acid chain: Mesoderm posterior protein 1 (243 aa).

The interval 1–86 is disordered; the sequence is MAQPLCEPRS…QRQSASEREK (86 aa). Residues 27–36 show a composition bias toward polar residues; sequence DGNSVCSPAW. The bHLH domain maps to 76–130; the sequence is GQRQSASEREKLRMRTLARALHELRRFLPPSVAPTGQNLTKIETLRLAIRYIGHL. Residues 153–157 carry the CPLCP motif; sequence CPLCP. Positions 204–228 are disordered; sequence AETASQERQEMEPSPSSPLFSSDML.

In terms of tissue distribution, no expression was detected in adult tissues except the testis. Expression in the testis was regulated developmentally; expressed 2 weeks after birth, and increases, reaching the full expression level in mature testes.

The protein resides in the nucleus. Its function is as follows. Transcription factor. Plays a role in the epithelialization of somitic mesoderm and in the development of cardiac mesoderm. Defines the rostrocaudal patterning of the somites by participating in distinct Notch pathways. In Mus musculus (Mouse), this protein is Mesoderm posterior protein 1 (Mesp1).